Here is a 576-residue protein sequence, read N- to C-terminus: Protein alan shepard (576 aa).

Residues M1–Q12 show a composition bias toward pro residues. Positions M1–P66 are disordered. Residue Y5 is modified to Phosphotyrosine. Positions Q13–Q24 are enriched in low complexity. The span at Q25–M35 shows a compositional bias: gly residues. The segment covering G37–Y54 has biased composition (polar residues). Residues S55–P66 show a composition bias toward low complexity. 2 positions are modified to phosphotyrosine: Y125 and Y142. Residues P164–G225 are disordered. Residues S178 to G225 show a composition bias toward low complexity. RRM domains lie at T231–Q302 and T308–G387. The disordered stretch occupies residues Y538–K576.

In terms of biological role, has a role in the perception of gravity. This Drosophila simulans (Fruit fly) protein is Protein alan shepard.